Here is a 130-residue protein sequence, read N- to C-terminus: Protein PELPK2 (130 aa).

A signal peptide spans 1–32; that stretch reads MTLKKSFSASLLSPFLIICLIALLSVPVSVGA. Tandem repeats lie at residues 47 to 51, 52 to 56, 58 to 62, 63 to 67, 69 to 73, 74 to 78, 80 to 84, 91 to 95, 97 to 101, 102 to 106, 108 to 112, 113 to 117, and 121 to 125. Positions 47 to 125 are 13 X 5 AA tandem repeat of P-[DEGQ]-[AEFLIV]-[QPT]-K; it reads PELPKPEMPK…TKVPAFTMPK (79 aa). Positions 71 to 84 are enriched in basic and acidic residues; it reads IPKPEMPKLPEIQK. Residues 71–130 are disordered; the sequence is IPKPEMPKLPEIQKPELPTFPELPKMPEFPKFDFPKLPELPKPEETKVPAFTMPKFPGSP. Over residues 98 to 117 the composition is skewed to basic and acidic residues; it reads EFPKFDFPKLPELPKPEETK.

It localises to the secreted. It is found in the cell wall. The sequence is that of Protein PELPK2 from Arabidopsis thaliana (Mouse-ear cress).